We begin with the raw amino-acid sequence, 200 residues long: Male-specific histamine-binding salivary protein (200 aa).

Residues 1-18 (MKVLLLVLGAALCQNADA) form the signal peptide. Residues Ser37, Asp41, Asp56, and Trp59 each coordinate histamine. 2 disulfides stabilise this stretch: Cys65/Cys193 and Cys137/Cys169. An N-linked (GlcNAc...) asparagine glycan is attached at Asn79. Residues Glu97, Tyr115, Phe125, Asp138, Glu154, and Trp156 each contribute to the histamine site.

Belongs to the calycin superfamily. Histamine-binding salivary protein family. As to quaternary structure, homodimer; disulcde-linked. N-glycosylated. Expressed in salivary glands.

Its subcellular location is the secreted. Its function is as follows. Salivary tick protein that acts by scavenging histamine at the wound site, outcompeting histamine receptors for histamine, thereby overcoming host inflammatory responses. Binds histamine with a high-affinity (Kd=1.2 nM). Contains two binding histamine sites (H and L), that appear to bind histamine with differing affinities. The sequence is that of Male-specific histamine-binding salivary protein from Rhipicephalus appendiculatus (Brown ear tick).